Consider the following 238-residue polypeptide: Large ribosomal subunit protein uL2 (238 aa).

A disordered region spans residues 199-238 (PHGGGLHQSVSRPSTVSRNAPPGRKVGHIAARRTGRKEGA). Residues 206-216 (QSVSRPSTVSR) are compositionally biased toward polar residues. The segment covering 223 to 238 (KVGHIAARRTGRKEGA) has biased composition (basic residues).

The protein belongs to the universal ribosomal protein uL2 family. Part of the 50S ribosomal subunit. Forms a bridge to the 30S subunit in the 70S ribosome.

One of the primary rRNA binding proteins. Required for association of the 30S and 50S subunits to form the 70S ribosome, for tRNA binding and peptide bond formation. It has been suggested to have peptidyltransferase activity; this is somewhat controversial. Makes several contacts with the 16S rRNA in the 70S ribosome. This Sulfurisphaera tokodaii (strain DSM 16993 / JCM 10545 / NBRC 100140 / 7) (Sulfolobus tokodaii) protein is Large ribosomal subunit protein uL2.